The primary structure comprises 93 residues: Acylphosphatase (93 aa).

The Acylphosphatase-like domain occupies 6–93 (RAIVTVKGLV…GEFDTFDVRY (88 aa)). Catalysis depends on residues Arg-21 and Asn-39.

Belongs to the acylphosphatase family.

The enzyme catalyses an acyl phosphate + H2O = a carboxylate + phosphate + H(+). The protein is Acylphosphatase (acyP) of Geobacter metallireducens (strain ATCC 53774 / DSM 7210 / GS-15).